The chain runs to 311 residues: Probable manganese-dependent inorganic pyrophosphatase (311 aa).

Residues histidine 9, aspartate 13, aspartate 15, aspartate 77, histidine 99, and aspartate 151 each coordinate Mn(2+).

The protein belongs to the PPase class C family. Mn(2+) serves as cofactor.

The protein localises to the cytoplasm. It catalyses the reaction diphosphate + H2O = 2 phosphate + H(+). The polypeptide is Probable manganese-dependent inorganic pyrophosphatase (Streptococcus sanguinis (strain SK36)).